Here is a 183-residue protein sequence, read N- to C-terminus: Mast cell-expressed membrane protein 1 (183 aa).

A disordered region spans residues 1–26 (MHASASQDKNRRKPGHDEGAHNPDYE). Residues 1 to 70 (MHASASQDKN…PPWLYRTIMM (70 aa)) lie on the Cytoplasmic side of the membrane. Basic and acidic residues predominate over residues 15–24 (GHDEGAHNPD). Residues 71-91 (LYVLLALVFLSCIVLSALVLV) form a helical; Signal-anchor for type II membrane protein membrane-spanning segment. Residues 92–183 (KNSEMSKELW…EKKAQPQPST (92 aa)) are Extracellular-facing. The N-linked (GlcNAc...) asparagine glycan is linked to Asn109.

The protein localises to the membrane. This chain is Mast cell-expressed membrane protein 1, found in Mus musculus (Mouse).